The sequence spans 288 residues: 3'-5' exonuclease (288 aa).

Residues Arg-30–Pro-67 are disordered. 2 stretches are compositionally biased toward polar residues: residues Ala-38–Val-48 and Gln-57–Pro-67. The region spanning Phe-129 to Lys-279 is the 3'-5' exonuclease domain.

In terms of assembly, interacts with KU70 and KU80. Interacts with RECQL2. Requires Mg(2+) as cofactor. Mn(2+) serves as cofactor. In terms of tissue distribution, expressed ubiquitously.

Its subcellular location is the nucleus. Activated upon interaction with the KU heterodimer. Not stimulated by ATP. Its function is as follows. Exonuclease that digests recessed strands of DNA duplexes in the 3' to 5' direction but hardly single-stranded DNA or blunt-ended duplexes. Also able to digest 3'-protruding strands and 3'-recessed strand termini of duplexes containing mismatched bases. This chain is 3'-5' exonuclease (WEX), found in Arabidopsis thaliana (Mouse-ear cress).